We begin with the raw amino-acid sequence, 175 residues long: DELTA-stichotoxin-Hcr4a (175 aa).

Positions 1 to 10 (ALAGAIIAGA) are plays an important role in the hemolytic activity. An N-terminal region region spans residues 9–28 (GASLTFQILDKVLAELGQVS). Phosphocholine is bound by residues serine 52, valine 85, serine 103, proline 105, tyrosine 131, tyrosine 135, and tyrosine 136. Residues 103–118 (SVPFDYNLYSNWWDVK) form a trp-rich region, which is important for the binding to lipid membrane region.

This sequence belongs to the actinoporin family. Sea anemone subfamily. As to quaternary structure, octamer or nonamer in membranes. Monomer in the soluble state.

It is found in the secreted. The protein resides in the nematocyst. Its subcellular location is the target cell membrane. Pore-forming protein that forms cations-selective hydrophilic pores of around 1 nm and causes cardiac stimulation and cytolysis. Pore formation is a multi-step process that involves specific recognition of membrane sphingomyelin (but neither cholesterol nor phosphatidylcholine) using aromatic rich region and adjacent phosphocholine (POC) binding site, firm binding to the membrane (mainly driven by hydrophobic interactions) accompanied by the transfer of the N-terminal region to the lipid-water interface and finally pore formation after oligomerization of monomers. This is DELTA-stichotoxin-Hcr4a from Radianthus crispa (Leathery sea anemone).